Reading from the N-terminus, the 125-residue chain is Holo-[acyl-carrier-protein] synthase (125 aa).

Mg(2+) is bound by residues Asp-8 and Glu-57.

It belongs to the P-Pant transferase superfamily. AcpS family. Mg(2+) is required as a cofactor.

It localises to the cytoplasm. It catalyses the reaction apo-[ACP] + CoA = holo-[ACP] + adenosine 3',5'-bisphosphate + H(+). Its function is as follows. Transfers the 4'-phosphopantetheine moiety from coenzyme A to a Ser of acyl-carrier-protein. In Blochmanniella pennsylvanica (strain BPEN), this protein is Holo-[acyl-carrier-protein] synthase.